Consider the following 482-residue polypeptide: Iroquois-class homeodomain protein irx-5 (482 aa).

The segment at residues 109-171 (DPAYRKNATR…NARRRLKKEN (63 aa)) is a DNA-binding region (homeobox). Disordered stretches follow at residues 173 to 307 (MTWT…HQSH) and 462 to 482 (QSQA…MSSI). The span at 182–198 (EDEEDDENIDLEKNEED) shows a compositional bias: acidic residues. A compositionally biased stretch (basic and acidic residues) spans 199–256 (DPRKLEEKGDQDGDAGDQKRSPSAVDFDRLEGEVRQGKELDQTRSDSEQNEVEERNDL). The segment covering 264–273 (PTSPLCPPDQ) has biased composition (pro residues). Residues 284-305 (HRHTVHNHHHQSIQQLHHHSHQ) are compositionally biased toward basic residues. The span at 467–482 (LNKDTPYEMKKGMSSI) shows a compositional bias: basic and acidic residues.

Belongs to the TALE/IRO homeobox family. Expressed in the neural plate in overlapping patterns with other irx members, which all share an anterior border of expression. Broadly expressed in the tailbud rhombencephalon (hindbrain). Outside the nervous system and at tailbud stages, expressed in the developing otic vesicle and branchial arches.

It localises to the nucleus. Acts partially redundantly with other irx members in neural patterning. Required for formation of the posterior forebrain, midbrain, hindbrain, and to a lesser extent, spinal cord. Patterns the neuroectoderm in both the anterior/posterior and dorsal/ventral axes. Does not appear to play a role in pronephros kidney development. Involved in craniofacial and gonadal development. Modulates the migration of progenitor cell populations in branchial arches and gonads by repressing CXCL12. This Xenopus tropicalis (Western clawed frog) protein is Iroquois-class homeodomain protein irx-5.